Consider the following 299-residue polypeptide: Ribosomal protein L11 methyltransferase (299 aa).

4 residues coordinate S-adenosyl-L-methionine: Thr150, Gly171, Asp193, and Asn234.

This sequence belongs to the methyltransferase superfamily. PrmA family.

The protein resides in the cytoplasm. The catalysed reaction is L-lysyl-[protein] + 3 S-adenosyl-L-methionine = N(6),N(6),N(6)-trimethyl-L-lysyl-[protein] + 3 S-adenosyl-L-homocysteine + 3 H(+). Functionally, methylates ribosomal protein L11. The chain is Ribosomal protein L11 methyltransferase from Dictyoglomus turgidum (strain DSM 6724 / Z-1310).